Reading from the N-terminus, the 208-residue chain is Pyridoxine/pyridoxamine 5'-phosphate oxidase (208 aa).

FMN-binding positions include 53 to 58, 68 to 69, lysine 75, and glutamine 100; these read RTVLLK and YS. Lysine 58 contributes to the substrate binding site. Tyrosine 118, arginine 122, and serine 126 together coordinate substrate. Residues 135 to 136 and tryptophan 180 each bind FMN; that span reads QS. Substrate is bound at residue 186 to 188; sequence RLH. Arginine 190 is a binding site for FMN.

Belongs to the pyridoxamine 5'-phosphate oxidase family. Homodimer. The cofactor is FMN.

It carries out the reaction pyridoxamine 5'-phosphate + O2 + H2O = pyridoxal 5'-phosphate + H2O2 + NH4(+). It catalyses the reaction pyridoxine 5'-phosphate + O2 = pyridoxal 5'-phosphate + H2O2. Its pathway is cofactor metabolism; pyridoxal 5'-phosphate salvage; pyridoxal 5'-phosphate from pyridoxamine 5'-phosphate: step 1/1. It participates in cofactor metabolism; pyridoxal 5'-phosphate salvage; pyridoxal 5'-phosphate from pyridoxine 5'-phosphate: step 1/1. Catalyzes the oxidation of either pyridoxine 5'-phosphate (PNP) or pyridoxamine 5'-phosphate (PMP) into pyridoxal 5'-phosphate (PLP). This chain is Pyridoxine/pyridoxamine 5'-phosphate oxidase, found in Xylella fastidiosa (strain Temecula1 / ATCC 700964).